A 302-amino-acid polypeptide reads, in one-letter code: 4-hydroxy-tetrahydrodipicolinate synthase (302 aa).

Pyruvate is bound at residue Thr55. Tyr144 (proton donor/acceptor) is an active-site residue. The active-site Schiff-base intermediate with substrate is the Lys172. Val214 contacts pyruvate.

It belongs to the DapA family. As to quaternary structure, homotetramer; dimer of dimers.

Its subcellular location is the cytoplasm. The enzyme catalyses L-aspartate 4-semialdehyde + pyruvate = (2S,4S)-4-hydroxy-2,3,4,5-tetrahydrodipicolinate + H2O + H(+). It participates in amino-acid biosynthesis; L-lysine biosynthesis via DAP pathway; (S)-tetrahydrodipicolinate from L-aspartate: step 3/4. Catalyzes the condensation of (S)-aspartate-beta-semialdehyde [(S)-ASA] and pyruvate to 4-hydroxy-tetrahydrodipicolinate (HTPA). The sequence is that of 4-hydroxy-tetrahydrodipicolinate synthase from Prochlorococcus marinus (strain MIT 9211).